The chain runs to 479 residues: Protein nucleotidyltransferase YdiU (479 aa).

Residues Gly83, Gly85, Arg86, Lys106, Asp118, Gly119, Arg169, and Arg176 each coordinate ATP. Asp245 serves as the catalytic Proton acceptor. Positions 246 and 255 each coordinate Mg(2+). An ATP-binding site is contributed by Asp255.

Belongs to the SELO family. Mg(2+) is required as a cofactor. The cofactor is Mn(2+).

It catalyses the reaction L-seryl-[protein] + ATP = 3-O-(5'-adenylyl)-L-seryl-[protein] + diphosphate. It carries out the reaction L-threonyl-[protein] + ATP = 3-O-(5'-adenylyl)-L-threonyl-[protein] + diphosphate. The catalysed reaction is L-tyrosyl-[protein] + ATP = O-(5'-adenylyl)-L-tyrosyl-[protein] + diphosphate. The enzyme catalyses L-histidyl-[protein] + UTP = N(tele)-(5'-uridylyl)-L-histidyl-[protein] + diphosphate. It catalyses the reaction L-seryl-[protein] + UTP = O-(5'-uridylyl)-L-seryl-[protein] + diphosphate. It carries out the reaction L-tyrosyl-[protein] + UTP = O-(5'-uridylyl)-L-tyrosyl-[protein] + diphosphate. Functionally, nucleotidyltransferase involved in the post-translational modification of proteins. It can catalyze the addition of adenosine monophosphate (AMP) or uridine monophosphate (UMP) to a protein, resulting in modifications known as AMPylation and UMPylation. This Erwinia tasmaniensis (strain DSM 17950 / CFBP 7177 / CIP 109463 / NCPPB 4357 / Et1/99) protein is Protein nucleotidyltransferase YdiU.